A 459-amino-acid chain; its full sequence is Neuronal acetylcholine receptor subunit beta-2 (459 aa).

Topologically, residues 1–203 are extracellular; that stretch reads LRSDFLLGPE…ITYDFVIKRK (203 aa). N-linked (GlcNAc...) asparagine glycosylation is found at Asn-21 and Asn-138. The cysteines at positions 125 and 139 are disulfide-linked. A helical membrane pass occupies residues 204–228; the sequence is PLFYTINLIIPCVLITSLAILVFYL. The Cytoplasmic portion of the chain corresponds to 229 to 235; the sequence is PSDCGEK. Residues 236-254 traverse the membrane as a helical segment; that stretch reads VTLCMSVLLALTVFLLLIS. Residues 255–269 are Extracellular-facing; that stretch reads KIVPPTSLAVPLIGK. The helical transmembrane segment at 270–291 threads the bilayer; that stretch reads YLMFTMVLVTFSIVTSVCVLNV. Residues 292–421 are Cytoplasmic-facing; that stretch reads HHRSPSTHYM…WKYVAMVIDR (130 aa). Residues 422–440 form a helical membrane-spanning segment; the sequence is LFLWIFILVCVVGTLGLFV.

Belongs to the ligand-gated ion channel (TC 1.A.9) family. Acetylcholine receptor (TC 1.A.9.1) subfamily. Beta-2/CHRNB2 sub-subfamily. Neuronal AChR is a heteropentamer composed of two different types of subunits: alpha and beta. CHRNB2/Beta-2 subunit can be combined to CHRNA2/alpha-2, CHRNA3/alpha-3 or CHRNA4/alpha-4, CHRNA5/alpha-5, CHRNA6/alpha-6 and CHRNB3/beta-3 to give rise to functional receptors.

It localises to the synaptic cell membrane. The protein localises to the cell membrane. It carries out the reaction Ca(2+)(in) = Ca(2+)(out). It catalyses the reaction K(+)(in) = K(+)(out). The catalysed reaction is Na(+)(in) = Na(+)(out). Activated by a myriad of ligands such as acetylcholine, cytisine, nicotine, choline and epibatidine. nAChR activity is inhibited by the antagonist alpha-conotoxins BuIA, PnIA, PnIC, GID and MII, small disulfide-constrained peptides from cone snails. Component of neuronal acetylcholine receptors (nAChRs) that function as pentameric, ligand-gated cation channels with high calcium permeability among other activities. nAChRs are excitatory neurotrasnmitter receptors formed by a collection of nAChR subunits known to mediate synaptic transmission in the nervous system and the neuromuscular junction. Each nAchR subunit confers differential attributes to channel properties, including activation, deactivation and desensitization kinetics, pH sensitivity, cation permeability, and binding to allosteric modulators. CHRNB2 forms heteropentameric neuronal acetylcholine receptors with CHRNA2, CHRNA3, CHRNA4 and CHRNA6, as well as CHRNA5 and CHRNB3 as accesory subunits. This is Neuronal acetylcholine receptor subunit beta-2 (chrnb2) from Carassius auratus (Goldfish).